A 224-amino-acid polypeptide reads, in one-letter code: uncharacterized protein (224 aa).

Positions 1–30 are cleaved as a signal peptide; it reads MSRSSSSMATVLVVLMVVSAGGLSPPCAAA. N-linked (GlcNAc...) asparagine glycosylation is present at N141.

It is found in the secreted. This is an uncharacterized protein from Oryza sativa subsp. japonica (Rice).